The chain runs to 368 residues: Glutamate 5-kinase (368 aa).

K18 contacts ATP. 3 residues coordinate substrate: S58, D145, and N157. Residues 177–178 and 218–224 each bind ATP; these read SD and TGGMASK. The PUA domain occupies 280–358; it reads AGSLTLDEGA…SELPGELRRP (79 aa).

Belongs to the glutamate 5-kinase family.

Its subcellular location is the cytoplasm. The catalysed reaction is L-glutamate + ATP = L-glutamyl 5-phosphate + ADP. Its pathway is amino-acid biosynthesis; L-proline biosynthesis; L-glutamate 5-semialdehyde from L-glutamate: step 1/2. In terms of biological role, catalyzes the transfer of a phosphate group to glutamate to form L-glutamate 5-phosphate. The protein is Glutamate 5-kinase of Mycobacterium ulcerans (strain Agy99).